We begin with the raw amino-acid sequence, 682 residues long: Zinc finger protein 16 (682 aa).

A compositionally biased stretch (basic and acidic residues) spans 1–10; the sequence is MPSLRTRREE. Residues 1-38 form a disordered region; sequence MPSLRTRREEAEMELSAPGPSPWTPAAQARVSDAPAVT. The interval 62 to 210 is necessary for transcription activation; that stretch reads YQQPDCDTRT…GVPTAESPLI (149 aa). The C2H2-type 1; degenerate zinc-finger motif lies at 209-231; sequence LICNECGKTFRGNPDLIQRQIVH. A C2H2-type 2; degenerate zinc finger spans residues 237–259; the sequence is FMCDDCGKTFSQNSVLKNRHRSH. Residue lysine 253 forms a Glycyl lysine isopeptide (Lys-Gly) (interchain with G-Cter in SUMO2) linkage. 8 C2H2-type zinc fingers span residues 265-287, 293-315, 321-343, 349-371, 377-399, 405-427, 433-455, and 461-483; these read YQCS…QSHH, YTCT…QKSH, YECN…QRIH, YVCS…HRTH, FECG…QRVH, YECN…HRVH, YKCS…RRIH, and HVCN…QIIH. 2 required for nuclear localization regions span residues 268-393 and 341-373; these read SECG…AHLR and RIHS…THTG. Residues 473–503 form a required for nuclear localization region; the sequence is SSVLRKHQIIHTGEKPYRCSVCGKAFSHSSA. Lysine 487 is subject to N6-acetyllysine. 7 C2H2-type zinc fingers span residues 489 to 511, 517 to 539, 545 to 567, 573 to 595, 601 to 623, 629 to 651, and 657 to 679; these read YRCS…QGVH, YACH…QRVH, YECT…QRIH, HECN…QKVH, YTCV…QIIH, YKCS…QRIH, and YDCA…QLIH.

The protein belongs to the krueppel C2H2-type zinc-finger protein family. Interacts with INCA1; the interaction inhibits INCA1 activity and induces the cell cycle process.

The protein localises to the nucleus. In terms of biological role, acts as a transcriptional activator. Promotes cell proliferation by facilitating the cell cycle phase transition from the S to G2/M phase. Involved in both the hemin- and phorbol myristate acetate (PMA)-induced erythroid and megakaryocytic differentiation, respectively. Also plays a role as an inhibitor of cell apoptosis. The sequence is that of Zinc finger protein 16 (ZNF16) from Pan troglodytes (Chimpanzee).